We begin with the raw amino-acid sequence, 190 residues long: Fe/S biogenesis protein NfuA (190 aa).

Positions 148 and 151 each coordinate [4Fe-4S] cluster.

It belongs to the NfuA family. As to quaternary structure, homodimer. Requires [4Fe-4S] cluster as cofactor.

In terms of biological role, involved in iron-sulfur cluster biogenesis. Binds a 4Fe-4S cluster, can transfer this cluster to apoproteins, and thereby intervenes in the maturation of Fe/S proteins. Could also act as a scaffold/chaperone for damaged Fe/S proteins. The sequence is that of Fe/S biogenesis protein NfuA from Baumannia cicadellinicola subsp. Homalodisca coagulata.